The primary structure comprises 458 residues: Protein adenylyltransferase FICD (458 aa).

At 1-23 (MMLIPMASVMAVTEPKWVSVWSR) the chain is on the cytoplasmic side. A helical; Signal-anchor for type II membrane protein transmembrane segment spans residues 24 to 44 (FLWVTLLSMVLGSLLALLLPL). Residues 45 to 458 (GAVEEQCLAV…GFKETLPVKP (414 aa)) are Lumenal-facing. Serine 79 carries the post-translational modification O-AMP-serine; by autocatalysis. Position 80 is an O-AMP-threonine; by autocatalysis (threonine 80). 2 TPR repeats span residues 106-139 (ARAALNQALEMKRQGKREKAQKLFMHALKMDPDF) and 140-173 (VDALTEFGIFSEEDKDIIQADYLYTRALTISPYH). Position 183 is an O-AMP-threonine; by autocatalysis (threonine 183). The Inhibitory (S/T)XXXE(G/N) motif signature appears at 230–235 (TVAIEG). Residue glutamate 234 participates in ATP binding. A glycan (N-linked (GlcNAc...) asparagine) is linked at asparagine 275. Positions 285-420 (VTISDVLEIH…VRPFIRFIAK (136 aa)) constitute a Fido domain. An ATP-binding site is contributed by 316 to 319 (VGHH). Histidine 363 is a catalytic residue. Residues 367-374 (DGNGRTSR), 399-400 (YY), and asparagine 407 contribute to the ATP site. The N-linked (GlcNAc...) asparagine glycan is linked to asparagine 446.

This sequence belongs to the fic family. In terms of assembly, homodimer. Interacts with HD. The cofactor is Mg(2+). Mn(2+) serves as cofactor. In terms of processing, auto-AMPylated in vitro; it is unclear whether auto-AMPylation is relevant in vivo. Post-translationally, N-glycosylated; predominantly glycosylated at Asn-275. In terms of tissue distribution, ubiquitous.

The protein localises to the endoplasmic reticulum membrane. The enzyme catalyses L-tyrosyl-[protein] + ATP = O-(5'-adenylyl)-L-tyrosyl-[protein] + diphosphate. It carries out the reaction 3-O-(5'-adenylyl)-L-threonyl-[protein] + H2O = L-threonyl-[protein] + AMP + H(+). The catalysed reaction is L-threonyl-[protein] + ATP = 3-O-(5'-adenylyl)-L-threonyl-[protein] + diphosphate. The side chain of Glu-234 determines which of the two opposing activities (AMPylase or de-AMPylase) will take place. In response to endoplasmic reticulum stress, mediates de-AMPylase activity. Adenylyltransferase activity is inhibited by the inhibitory helix present at the N-terminus: Glu-234 binds ATP and competes with ATP-binding at Arg-374, thereby preventing adenylyltransferase activity. In unstressed cells, disengagement of Glu-234 promotes adenylyltransferase activity. Activation dissociates ATP-binding from Glu-234, allowing ordered binding of the entire ATP moiety with the alpha-phosphate in an orientation that is productive for accepting an incoming target hydroxyl side chain. Protein that can both mediate the addition of adenosine 5'-monophosphate (AMP) to specific residues of target proteins (AMPylation), and the removal of the same modification from target proteins (de-AMPylation), depending on the context. The side chain of Glu-231 determines which of the two opposing activities (AMPylase or de-AMPylase) will take place. Acts as a key regulator of the ERN1/IRE1-mediated unfolded protein response (UPR) by mediating AMPylation or de-AMPylation of HSPA5/BiP. In unstressed cells, acts as an adenylyltransferase by mediating AMPylation of HSPA5/BiP at 'Thr-518', thereby inactivating it. In response to endoplasmic reticulum stress, acts as a phosphodiesterase by mediating removal of ATP (de-AMPylation) from HSPA5/BiP at 'Thr-518', leading to restore HSPA5/BiP activity. Although it is able to AMPylate RhoA, Rac and Cdc42 Rho GTPases in vitro, Rho GTPases do not constitute physiological substrates. In Homo sapiens (Human), this protein is Protein adenylyltransferase FICD.